A 160-amino-acid polypeptide reads, in one-letter code: Nucleotide-binding protein Tola_0795 (160 aa).

This sequence belongs to the YajQ family.

Its function is as follows. Nucleotide-binding protein. This Tolumonas auensis (strain DSM 9187 / NBRC 110442 / TA 4) protein is Nucleotide-binding protein Tola_0795.